Consider the following 120-residue polypeptide: MKYTRKDSIIKRHRRVRKKVFGTSERPRLSVFRSNMHIYAQVIDDTKQHTLVAASTLEAEVKSTIKSGANCDASIQIGKLIAQRSLEKGIEKVVFDRGGNLYHGRVKALAEAAREAGLDF.

The protein belongs to the universal ribosomal protein uL18 family. As to quaternary structure, part of the 50S ribosomal subunit; part of the 5S rRNA/L5/L18/L25 subcomplex. Contacts the 5S and 23S rRNAs.

Its function is as follows. This is one of the proteins that bind and probably mediate the attachment of the 5S RNA into the large ribosomal subunit, where it forms part of the central protuberance. The polypeptide is Large ribosomal subunit protein uL18 (Trichodesmium erythraeum (strain IMS101)).